We begin with the raw amino-acid sequence, 104 residues long: Large ribosomal subunit protein uL24 (104 aa).

It belongs to the universal ribosomal protein uL24 family. As to quaternary structure, part of the 50S ribosomal subunit.

Functionally, one of two assembly initiator proteins, it binds directly to the 5'-end of the 23S rRNA, where it nucleates assembly of the 50S subunit. Its function is as follows. One of the proteins that surrounds the polypeptide exit tunnel on the outside of the subunit. The polypeptide is Large ribosomal subunit protein uL24 (Saccharopolyspora erythraea (strain ATCC 11635 / DSM 40517 / JCM 4748 / NBRC 13426 / NCIMB 8594 / NRRL 2338)).